Here is a 485-residue protein sequence, read N- to C-terminus: UDP-glycosyltransferase 71B2 (485 aa).

Residues S287, 354 to 356, 371 to 379, and 393 to 396 each bind UDP-alpha-D-glucose; these read APQ, HCGWNSTLE, and YAEQ.

It belongs to the UDP-glycosyltransferase family.

In terms of biological role, glucosyltransferase that glucosylates the cell wall inhibitor hypostatin in vivo to form a bioactive glucoside. The protein is UDP-glycosyltransferase 71B2 (UGT71B2) of Arabidopsis thaliana (Mouse-ear cress).